A 270-amino-acid chain; its full sequence is Chromo domain-containing protein cec-4 (270 aa).

2 disordered regions span residues Met1–Lys24 and Lys143–Val229. Residues Tyr87–Thr147 enclose the Chromo domain. Basic residues-rich tracts occupy residues Thr151 to Ala167 and Thr187 to Arg197. Positions Leu205–Val229 are enriched in basic and acidic residues.

Interacts with mono-, di- and tri-methylated 'Lys-9' residues on histone H3. Weakly interacts with methylated 'Lys-37' residues on histone H3.

It localises to the nucleus inner membrane. The protein localises to the membrane. In terms of biological role, chromatin anchor protein which binds to methylated lysine residues on histone H3, thereby recruiting heterochromatin to the nuclear periphery, especially in embryonic cells, with a lesser role in differentiated cells. May be required for the correct positioning of chromatin and nucleoli in embryos. In Caenorhabditis elegans, this protein is Chromo domain-containing protein cec-4.